Consider the following 1014-residue polypeptide: 2-oxoglutarate dehydrogenase, mitochondrial (1014 aa).

The transit peptide at Met-1 to Lys-30 directs the protein to the mitochondrion. Thiamine diphosphate-binding residues include Arg-306, Asp-406, Asn-439, and Ile-441. Residues Asp-406, Asn-439, and Ile-441 each contribute to the Mg(2+) site.

Belongs to the alpha-ketoglutarate dehydrogenase family. Component of the 2-oxoglutarate dehydrogenase complex (OGDC), also called alpha-ketoglutarate dehydrogenase (KGDH) complex. The copmplex is composed of the catalytic subunits OGDH (2-oxoglutarate dehydrogenase KGD1; also called E1 subunit), DLST (dihydrolipoamide succinyltransferase KGD2; also called E2 subunit) and DLD (dihydrolipoamide dehydrogenase LPD1; also called E3 subunit), and the assembly factor KGD4. Thiamine diphosphate is required as a cofactor. It depends on Mg(2+) as a cofactor.

It is found in the mitochondrion. Its subcellular location is the mitochondrion matrix. It localises to the mitochondrion nucleoid. It catalyses the reaction N(6)-[(R)-lipoyl]-L-lysyl-[protein] + 2-oxoglutarate + H(+) = N(6)-[(R)-S(8)-succinyldihydrolipoyl]-L-lysyl-[protein] + CO2. Catabolite repressed. Functionally, the 2-oxoglutarate dehydrogenase complex catalyzes the overall conversion of 2-oxoglutarate to succinyl-CoA and CO(2). It contains multiple copies of three enzymatic components: 2-oxoglutarate dehydrogenase (E1), dihydrolipoamide succinyltransferase (E2) and lipoamide dehydrogenase (E3). This chain is 2-oxoglutarate dehydrogenase, mitochondrial (KGD1), found in Saccharomyces cerevisiae (strain ATCC 204508 / S288c) (Baker's yeast).